The following is a 213-amino-acid chain: High frequency lysogenization protein HflD homolog (213 aa).

The stretch at 79-126 forms a coiled coil; it reads QGLNAELTRYTLSLMVLERKLSSAKGALDTLGNRINGLQRQLEHFDLQ.

This sequence belongs to the HflD family.

The protein resides in the cytoplasm. The protein localises to the cell inner membrane. This Shigella dysenteriae serotype 1 (strain Sd197) protein is High frequency lysogenization protein HflD homolog.